A 655-amino-acid polypeptide reads, in one-letter code: p-hydroxybenzoic acid efflux pump subunit AaeB (655 aa).

The next 11 membrane-spanning stretches (helical) occupy residues 13–33, 38–58, 69–89, 93–113, 121–141, 152–172, 370–390, 407–427, 431–451, 459–479, and 482–502; these read FAVK…HFQL, WAVL…GGEP, LRII…ISMI, LLMI…SSLV, WGLS…EPLL, EIVI…PRSI, LFWL…IAVV, FIYG…VIIP, QSML…GIEV, MGAL…TFHF, and FLDS…VILL.

The protein belongs to the aromatic acid exporter ArAE (TC 2.A.85) family.

It localises to the cell inner membrane. In terms of biological role, forms an efflux pump with AaeA. Could function as a metabolic relief valve, allowing to eliminate certain compounds when they accumulate to high levels in the cell. The chain is p-hydroxybenzoic acid efflux pump subunit AaeB from Salmonella heidelberg (strain SL476).